The chain runs to 103 residues: Small ribosomal subunit protein uS10 (103 aa).

The protein belongs to the universal ribosomal protein uS10 family. In terms of assembly, part of the 30S ribosomal subunit.

In terms of biological role, involved in the binding of tRNA to the ribosomes. The polypeptide is Small ribosomal subunit protein uS10 (Shewanella denitrificans (strain OS217 / ATCC BAA-1090 / DSM 15013)).